We begin with the raw amino-acid sequence, 310 residues long: Ribose-phosphate pyrophosphokinase (310 aa).

ATP contacts are provided by residues 33-35 and 92-93; these read DGE and RQ. The Mg(2+) site is built by H127 and D166. K189 is a catalytic residue. D-ribose 5-phosphate-binding positions include R191, D215, and 219-223; that span reads DTAGT.

It belongs to the ribose-phosphate pyrophosphokinase family. Class I subfamily. In terms of assembly, homohexamer. The cofactor is Mg(2+).

It localises to the cytoplasm. It catalyses the reaction D-ribose 5-phosphate + ATP = 5-phospho-alpha-D-ribose 1-diphosphate + AMP + H(+). The protein operates within metabolic intermediate biosynthesis; 5-phospho-alpha-D-ribose 1-diphosphate biosynthesis; 5-phospho-alpha-D-ribose 1-diphosphate from D-ribose 5-phosphate (route I): step 1/1. In terms of biological role, involved in the biosynthesis of the central metabolite phospho-alpha-D-ribosyl-1-pyrophosphate (PRPP) via the transfer of pyrophosphoryl group from ATP to 1-hydroxyl of ribose-5-phosphate (Rib-5-P). The polypeptide is Ribose-phosphate pyrophosphokinase (Bordetella pertussis (strain Tohama I / ATCC BAA-589 / NCTC 13251)).